The primary structure comprises 200 residues: dITP/XTP pyrophosphatase (200 aa).

8–13 (TRNAGK) contributes to the substrate binding site. The active-site Proton acceptor is the Asp72. Asp72 is a binding site for Mg(2+). Substrate is bound by residues Ser73, 155 to 158 (FGYD), Lys178, and 183 to 184 (HR).

This sequence belongs to the HAM1 NTPase family. As to quaternary structure, homodimer. The cofactor is Mg(2+).

The enzyme catalyses XTP + H2O = XMP + diphosphate + H(+). It catalyses the reaction dITP + H2O = dIMP + diphosphate + H(+). The catalysed reaction is ITP + H2O = IMP + diphosphate + H(+). In terms of biological role, pyrophosphatase that catalyzes the hydrolysis of nucleoside triphosphates to their monophosphate derivatives, with a high preference for the non-canonical purine nucleotides XTP (xanthosine triphosphate), dITP (deoxyinosine triphosphate) and ITP. Seems to function as a house-cleaning enzyme that removes non-canonical purine nucleotides from the nucleotide pool, thus preventing their incorporation into DNA/RNA and avoiding chromosomal lesions. This chain is dITP/XTP pyrophosphatase, found in Streptomyces coelicolor (strain ATCC BAA-471 / A3(2) / M145).